Consider the following 431-residue polypeptide: MANVVVVGAQWGDEGKGKVVDIYTEFADDVVRYQGGNNAGHTLVVGDEKIVLHLIPSGILHKGKRCIIGNGVVLDPEVFIREITNLKAKGKFQDDGVLLLSESLHIIMPYHKRIDIAREAKSGAKKIGTTGRGIGPAYEDKIGRRGIRLMDLLDKQVFTRKLKESLEEKNFLLEKMLGEKPFSFEEIFDEYSAFADTLRTYVADTTLVLHQDLKAGKKLLFEGAQGTLLDVDHGTYPYVTSSSTCAGGACTGTGASPRDINEIIGISKAYVTRVGSGPFPTELEDADGEKLRQTGGEFGATTGRPRRCGWFDALVIKYAVRVNGLTGIALTKLDVLSDFETIKICTGYSYNGKFLSELPANLDIFEKCQPVYEEMPGWQTDITAARSFDDLPEKARTYVKRLEELAGCPIVLVSVGPRRDQTIMLKNPFEA.

Residues 12–18 and 40–42 contribute to the GTP site; these read GDEGKGK and GHT. The active-site Proton acceptor is D13. Positions 13 and 40 each coordinate Mg(2+). IMP contacts are provided by residues 13 to 16, 38 to 41, T130, R144, Q225, T240, and R304; these read DEGK and NAGH. H41 functions as the Proton donor in the catalytic mechanism. 300–306 lines the substrate pocket; sequence ATTGRPR. Residues R306, 332–334, and 414–416 contribute to the GTP site; these read KLD and SVG.

The protein belongs to the adenylosuccinate synthetase family. Homodimer. Requires Mg(2+) as cofactor.

It is found in the cytoplasm. It carries out the reaction IMP + L-aspartate + GTP = N(6)-(1,2-dicarboxyethyl)-AMP + GDP + phosphate + 2 H(+). It functions in the pathway purine metabolism; AMP biosynthesis via de novo pathway; AMP from IMP: step 1/2. Its function is as follows. Plays an important role in the de novo pathway of purine nucleotide biosynthesis. Catalyzes the first committed step in the biosynthesis of AMP from IMP. This is Adenylosuccinate synthetase from Geotalea daltonii (strain DSM 22248 / JCM 15807 / FRC-32) (Geobacter daltonii).